An 82-amino-acid polypeptide reads, in one-letter code: uncharacterized protein (82 aa).

The first 19 residues, 1-19 (MKNLLKILLIIAFANPVFA), serve as a signal peptide directing secretion.

This is an uncharacterized protein from Rickettsia prowazekii (strain Madrid E).